Here is a 390-residue protein sequence, read N- to C-terminus: MTFKRVHLIVMDSVGIGEAPDAEKFGDAGSHTLKHTLEGFEGKLPNLEKLGLGNIAPLPVVNKVDKPEAYYTKLSEASVGKDTMTGHWEIMGLNIDQPFKVYPDGFPEELVTAIEEMTGRKVVANKPASGTAIIDEWGAHQMETGDLIVYTSADPVLQIAAHEEIIPLEELYEICEKVREYTKDPKYLIGRIIARPYVGEPGNFTRTSNRHDYALKPFGRTVMNELQDAGRDVIAIGKINDIYDGEGVTKSIRTKDNMDGMDKLLEVVKSDFDGLSFLNLVDFDALYGHRRDKEGYMNAIKAFDDRLGELLEALREDDLLIITADHGNDPTMPGTDHTREYVPLLMYSKQFDSGRELESHTTFASIGATIADNFGVELPEFGKSYLEELK.

Mn(2+)-binding residues include Asp12, Asp284, His289, Asp325, His326, and His337.

This sequence belongs to the phosphopentomutase family. Mn(2+) is required as a cofactor.

The protein localises to the cytoplasm. The enzyme catalyses 2-deoxy-alpha-D-ribose 1-phosphate = 2-deoxy-D-ribose 5-phosphate. It catalyses the reaction alpha-D-ribose 1-phosphate = D-ribose 5-phosphate. Its pathway is carbohydrate degradation; 2-deoxy-D-ribose 1-phosphate degradation; D-glyceraldehyde 3-phosphate and acetaldehyde from 2-deoxy-alpha-D-ribose 1-phosphate: step 1/2. Isomerase that catalyzes the conversion of deoxy-ribose 1-phosphate (dRib-1-P) and ribose 1-phosphate (Rib-1-P) to deoxy-ribose 5-phosphate (dRib-5-P) and ribose 5-phosphate (Rib-5-P), respectively. The polypeptide is Phosphopentomutase (Macrococcus caseolyticus (strain JCSC5402) (Macrococcoides caseolyticum)).